Reading from the N-terminus, the 105-residue chain is Small ribosomal subunit protein uS10 (105 aa).

The protein belongs to the universal ribosomal protein uS10 family. In terms of assembly, part of the 30S ribosomal subunit.

Functionally, involved in the binding of tRNA to the ribosomes. The sequence is that of Small ribosomal subunit protein uS10 from Francisella philomiragia subsp. philomiragia (strain ATCC 25017 / CCUG 19701 / FSC 153 / O#319-036).